Here is a 349-residue protein sequence, read N- to C-terminus: Protein Wnt-7b (349 aa).

An N-terminal signal peptide occupies residues 1 to 24 (MHRNFRKWIFYVFLCFGVLYVKLG). Cystine bridges form between Cys73/Cys84, Cys123/Cys131, Cys133/Cys152, Cys200/Cys214, and Cys202/Cys209. Residues Asn83 and Asn127 are each glycosylated (N-linked (GlcNAc...) asparagine). A lipid anchor (O-palmitoleoyl serine; by PORCN) is attached at Ser206. The segment at 238-266 (VEVVRASRLRQPTFLRIKQLRSYQKPMET) is disordered linker. Intrachain disulfides connect Cys278/Cys309, Cys294/Cys304, Cys308/Cys348, Cys324/Cys339, Cys326/Cys336, and Cys331/Cys332. Asn295 carries an N-linked (GlcNAc...) asparagine glycan.

Belongs to the Wnt family. Forms a soluble 1:1 complex with AFM; this prevents oligomerization and is required for prolonged biological activity. The complex with AFM may represent the physiological form in body fluids. Interacts with FZD1 and FZD10. Interacts with FZD4 (in vitro). Interacts with PORCN. Interacts with glypican GPC3. Interacts (via intrinsically disordered linker region) with RECK; interaction with RECK confers ligand selectivity for Wnt7 in brain endothelial cells and allows these cells to selectively respond to Wnt7. Palmitoleoylation is required for efficient binding to frizzled receptors. Depalmitoleoylation leads to Wnt signaling pathway inhibition.

It is found in the secreted. The protein localises to the extracellular space. The protein resides in the extracellular matrix. Its function is as follows. Ligand for members of the frizzled family of seven transmembrane receptors that functions in the canonical Wnt/beta-catenin signaling pathway. Required for normal fusion of the chorion and the allantois during placenta development. Required for central nervous system (CNS) angiogenesis and blood-brain barrier regulation. This Mus musculus (Mouse) protein is Protein Wnt-7b (Wnt7b).